A 504-amino-acid polypeptide reads, in one-letter code: Glucosaminyl-phosphatidylinositol-acyltransferase PIGW (504 aa).

At 1-21 (MSEKQMKEAFVSNLNGTTVLE) the chain is on the lumenal side. Residue Asn15 is glycosylated (N-linked (GlcNAc...) asparagine). A helical membrane pass occupies residues 22–42 (ITQGLCFPAFCILCRGFLIIF). Residues 43–56 (SQYLCSFSPTWKTR) are Cytoplasmic-facing. Residues 57–75 (FLTDFVVLIVPMVATLTIW) form a helical membrane-spanning segment. Residues 76-81 (ASFILL) are Lumenal-facing. Residues 82-98 (ELLGVIIFGAGLLYQIY) form a helical membrane-spanning segment. Residues 99–131 (RRRTCYARLPFLKILEKFLNISLESEYNPAISC) lie on the Cytoplasmic side of the membrane. The helical transmembrane segment at 132 to 152 (FRVITSAFTAIAILAVDFPLF) threads the bilayer. The Lumenal portion of the chain corresponds to 153–162 (PRRFAKTELY). The chain crosses the membrane as a helical span at residues 163 to 183 (GTGAMDFGVGGFVFGSAMVCL). Residues 184–202 (EVRRRKYMEGSKLHYFTNS) lie on the Cytoplasmic side of the membrane. A helical transmembrane segment spans residues 203–223 (LYSVWPLVFLGIGRLAIIKSI). Topologically, residues 224–237 (GYQEHLTEYGVHWN) are lumenal. The chain crosses the membrane as a helical span at residues 238-258 (FFFTIIVVKLITPLLLIIFPL). Topologically, residues 259–260 (NK) are cytoplasmic. A helical transmembrane segment spans residues 261–281 (SWIIALGITVLYQLALDFTSL). The Lumenal portion of the chain corresponds to 282–305 (KRLILYGTDGSGTRVGLLNANREG). The helical transmembrane segment at 306–326 (IISTLGYVAIHMAGVQTGLYM) threads the bilayer. Residues 327 to 338 (HKNRSHIKDLIK) lie on the Cytoplasmic side of the membrane. The helical transmembrane segment at 339-359 (VACFLLLAAISLFISLYVVQV) threads the bilayer. The Lumenal segment spans residues 360-370 (NVEAVSRRMAN). Residues 371-391 (LAFCIWIVASSLILLSSLLLG) traverse the membrane as a helical segment. Residues 392 to 448 (DIILSFAKFLIKGALVPCSWKLIQSPVTNKKHSESLVPEAERMEPSLCLITALNRKQ) lie on the Cytoplasmic side of the membrane. The residue at position 416 (Ser416) is a Phosphoserine. A helical membrane pass occupies residues 449-469 (LIFFLLSNITTGLINLMVDTL). Topologically, residues 470-473 (HSST) are lumenal. A helical transmembrane segment spans residues 474–494 (LWALFVVNLYMFSNCLIVYVL). Residues 495–504 (YLQDKTVQFW) are Cytoplasmic-facing.

Belongs to the PIGW family.

The protein resides in the endoplasmic reticulum membrane. Its pathway is glycolipid biosynthesis; glycosylphosphatidylinositol-anchor biosynthesis. Functionally, acyltransferase that catalyzes the acyl transfer from an acyl-CoA at the 2-OH position of the inositol ring of glucosaminyl phosphatidylinositol (GlcN-PI) to generate glucosaminyl acyl phosphatidylinositol (GlcN-(acyl)PI) and participates in the fourth step of GPI-anchor biosynthesis. Required for the transport of GPI-anchored proteins to the plasma membrane. Acetylation during GPI-anchor biosynthesis is not essential for the subsequent mannosylation and is usually removed soon after the attachment of GPIs to proteins. The chain is Glucosaminyl-phosphatidylinositol-acyltransferase PIGW from Homo sapiens (Human).